Reading from the N-terminus, the 122-residue chain is Large ribosomal subunit protein uL14c (122 aa).

Belongs to the universal ribosomal protein uL14 family. As to quaternary structure, part of the 50S ribosomal subunit.

The protein resides in the plastid. It is found in the chloroplast. Binds to 23S rRNA. This chain is Large ribosomal subunit protein uL14c, found in Dioscorea elephantipes (Elephant's foot yam).